We begin with the raw amino-acid sequence, 612 residues long: Calcium-dependent protein kinase 27 (612 aa).

Residue G2 is the site of N-myristoyl glycine attachment. Residues 23–132 are disordered; the sequence is PRHAAPSSPS…AHIKRISSAG (110 aa). Residues 28–50 show a composition bias toward low complexity; that stretch reads PSSPSQPTTTSRSIPVVLPSAPS. A compositionally biased stretch (pro residues) spans 51–100; it reads SKPPPPTQTAPPVPVVISEPPPPQPQPEPQPAAPSQPPPPQEQPSPPPPA. Positions 117–127 are enriched in basic residues; the sequence is SRAKKPAHIKR. One can recognise a Protein kinase domain in the interval 150-408; it reads YSLGRKLGQG…AHEVLCHPWL (259 aa). ATP contacts are provided by residues 156-164 and K179; that span reads LGQGQFGTT. Catalysis depends on D274, which acts as the Proton acceptor. The interval 414–444 is autoinhibitory domain; it reads APDKPLDSAVLSRLRQFSAMNKLKKMALRVI. EF-hand domains follow at residues 451-486, 487-522, 523-558, and 561-592; these read EEIAGLKEMFKMMDTDNSGQINYEELKAGLERVGAN, MKESEIYQLMQAADIDNSGTIDYGEFIAATLHLNKV, EREDHLYAAFQYFDKDGSGYITSDELQQACDEFGIE, and RLEDMIGEVDQDNDGRIDYNEFVAMMQKTTTG. The Ca(2+) site is built by D464, D466, S468, Q470, E475, D500, D502, S504, T506, E511, D536, D538, S540, Y542, E547, D570, D572, D574, R576, and E581.

This sequence belongs to the protein kinase superfamily. Ser/Thr protein kinase family. CDPK subfamily.

It localises to the membrane. It carries out the reaction L-seryl-[protein] + ATP = O-phospho-L-seryl-[protein] + ADP + H(+). The catalysed reaction is L-threonyl-[protein] + ATP = O-phospho-L-threonyl-[protein] + ADP + H(+). Its activity is regulated as follows. Activated by calcium. Autophosphorylation may play an important role in the regulation of the kinase activity. In terms of biological role, may play a role in signal transduction pathways that involve calcium as a second messenger. This is Calcium-dependent protein kinase 27 from Oryza sativa subsp. japonica (Rice).